Here is a 359-residue protein sequence, read N- to C-terminus: Stearoyl-CoA desaturase (359 aa).

The Cytoplasmic segment spans residues 1–72 (MPAHLLQEEI…EGPKPKLEYV (72 aa)). The helical transmembrane segment at 73 to 93 (WRNIILMGLLHLGALYGITLI) threads the bilayer. Asparagine 75 is a binding site for substrate. Topologically, residues 94–97 (PTCK) are lumenal. The chain crosses the membrane as a helical span at residues 98–118 (IYTFLWVLFYYMMSALGITAG). Residues 119 to 217 (VHRLWSHRTY…EKLVMFQRRY (99 aa)) lie on the Cytoplasmic side of the membrane. Residues histidine 120 and histidine 125 each coordinate Fe cation. The Histidine box-1 signature appears at 120-125 (HRLWSH). 3 residues coordinate substrate: asparagine 148, arginine 155, and aspartate 156. 3 residues coordinate Fe cation: histidine 157, histidine 160, and histidine 161. The Histidine box-2 signature appears at 157 to 161 (HRAHH). Positions 188 and 189 each coordinate substrate. The residue at position 203 (serine 203) is a Phosphoserine. Residues 218–237 (YKPGVLLLCFILPTLVPWYL) form a helical membrane-spanning segment. The Lumenal portion of the chain corresponds to 238–241 (WGET). A helical membrane pass occupies residues 242 to 263 (FQNSLFFATLLRYAVVLNATWL). Residue tryptophan 262 participates in substrate binding. Residues 264 to 359 (VNSAAHMYGY…RTGEESCKSG (96 aa)) lie on the Cytoplasmic side of the membrane. The Fe cation site is built by histidine 269, histidine 298, histidine 301, and histidine 302. The short motif at 298 to 302 (HNYHH) is the Histidine box-3 element.

The protein belongs to the fatty acid desaturase type 1 family. The cofactor is Fe(2+).

The protein localises to the endoplasmic reticulum membrane. It catalyses the reaction octadecanoyl-CoA + 2 Fe(II)-[cytochrome b5] + O2 + 2 H(+) = (9Z)-octadecenoyl-CoA + 2 Fe(III)-[cytochrome b5] + 2 H2O. The catalysed reaction is hexadecanoyl-CoA + 2 Fe(II)-[cytochrome b5] + O2 + 2 H(+) = (9Z)-hexadecenoyl-CoA + 2 Fe(III)-[cytochrome b5] + 2 H2O. Functionally, stearoyl-CoA desaturase that utilizes O(2) and electrons from reduced cytochrome b5 to introduce the first double bond into saturated fatty acyl-CoA substrates. Catalyzes the insertion of a cis double bond at the delta-9 position into fatty acyl-CoA substrates including palmitoyl-CoA and stearoyl-CoA. Gives rise to a mixture of 16:1 and 18:1 unsaturated fatty acids. Plays an important role in lipid biosynthesis. Plays an important role in regulating the expression of genes that are involved in lipogenesis and in regulating mitochondrial fatty acid oxidation. Plays an important role in body energy homeostasis. Contributes to the biosynthesis of membrane phospholipids, cholesterol esters and triglycerides. The polypeptide is Stearoyl-CoA desaturase (SCD) (Capra hircus (Goat)).